Reading from the N-terminus, the 242-residue chain is Neuromodulin (242 aa).

Residues 1–242 (MLCCMRRTKQ…EEREADQEHA (242 aa)) are disordered. S-palmitoyl cysteine attachment occurs at residues cysteine 3 and cysteine 4. The segment covering 9–32 (KQVEKNDEDQKIEQDGIKPEDKAH) has biased composition (basic and acidic residues). Residues 31 to 60 (AHKAATKIQASFRGHITRKKLKGEKKGDAP) enclose the IQ domain. Position 41 is a phosphoserine; by PHK and PKC (serine 41). Positions 66 to 84 (ANEKDEAAVAEGTEKKEGE) are enriched in basic and acidic residues. Low complexity predominate over residues 85–97 (GSTPAEAAPGAGP). Position 86 is a phosphoserine (serine 86). Basic and acidic residues predominate over residues 98-118 (KPEEKTGKAGETPSEEKKGEG). Residues 119 to 134 (APDAATEQAAPQAPAP) are compositionally biased toward low complexity. Over residues 143-158 (ETESATKASTDNSPSS) the composition is skewed to polar residues. Phosphoserine is present on residues serine 155, serine 157, and serine 158. Over residues 159-171 (KAEDAPAKEEPKQ) the composition is skewed to basic and acidic residues. Residues 172 to 204 (ADVPAAVTAAAATAPAAEDAAAMATAQPPTETA) show a composition bias toward low complexity. Phosphoserine; by CK2 occurs at positions 206 and 207. Residues 209-242 (AEEKIEAVDETKPKDSARQDEGKGEEREADQEHA) show a composition bias toward basic and acidic residues.

This sequence belongs to the neuromodulin family. As to quaternary structure, identified in a complex containing FGFR4, NCAM1, CDH2, PLCG1, FRS2, SRC, SHC1, GAP43 and CTTN. Interacts (via IQ domain) with calmodulin. Binds calmodulin with a greater affinity in the absence of Ca(2+) than in its presence. Phosphorylated. Phosphorylation of this protein by a protein kinase C is specifically correlated with certain forms of synaptic plasticity. Post-translationally, palmitoylated by ZDHHC3. Palmitoylation is regulated by ARF6 and is essential for plasma membrane association and axonal and dendritic filopodia induction. Deacylated by LYPLA2.

The protein localises to the cell membrane. The protein resides in the cell projection. Its subcellular location is the growth cone membrane. It is found in the synapse. It localises to the filopodium membrane. The protein localises to the perikaryon. The protein resides in the dendrite. Its subcellular location is the axon. It is found in the cytoplasm. Its function is as follows. This protein is associated with nerve growth. It is a major component of the motile 'growth cones' that form the tips of elongating axons. Plays a role in axonal and dendritic filopodia induction. The polypeptide is Neuromodulin (GAP43) (Bos taurus (Bovine)).